The following is a 252-amino-acid chain: MPTTERVAKVVLVDIEGTTTSISFVHDVLFPYAKNNVKKFLEESWESSSEVKQIVRELQQVPQYAEYTATLRVPPKEVDVQVITGFVRYLIDKDLKVTPLKTLQGLIWQQGYETGELMGHVFNDVPGAFEAWREAGLRIAVYSSGSVAAQKLIFKYSIVGDLLTHLSTHFDTHVGHKQESQSYANIAQSLGEDPSHILFLTDIPGEAAAARSAGLQTIILQRPGNTPLTDDQKYSNELIADFSSLHTLQLPE.

Residues D14 and E16 each coordinate Mg(2+). Substrate-binding positions include 143 to 144 (SS) and K177. A Mg(2+)-binding site is contributed by D202.

It belongs to the HAD-like hydrolase superfamily. MasA/MtnC family. Monomer. Mg(2+) is required as a cofactor.

It is found in the cytoplasm. The protein localises to the nucleus. The catalysed reaction is 5-methylsulfanyl-2,3-dioxopentyl phosphate + H2O = 1,2-dihydroxy-5-(methylsulfanyl)pent-1-en-3-one + phosphate. The protein operates within amino-acid biosynthesis; L-methionine biosynthesis via salvage pathway; L-methionine from S-methyl-5-thio-alpha-D-ribose 1-phosphate: step 3/6. It participates in amino-acid biosynthesis; L-methionine biosynthesis via salvage pathway; L-methionine from S-methyl-5-thio-alpha-D-ribose 1-phosphate: step 4/6. Its function is as follows. Bifunctional enzyme that catalyzes the enolization of 2,3-diketo-5-methylthiopentyl-1-phosphate (DK-MTP-1-P) into the intermediate 2-hydroxy-3-keto-5-methylthiopentenyl-1-phosphate (HK-MTPenyl-1-P), which is then dephosphorylated to form the acireductone 1,2-dihydroxy-3-keto-5-methylthiopentene (DHK-MTPene). The protein is Enolase-phosphatase E1 of Drosophila pseudoobscura pseudoobscura (Fruit fly).